A 291-amino-acid chain; its full sequence is ATP synthase gamma chain (291 aa).

The protein belongs to the ATPase gamma chain family. F-type ATPases have 2 components, CF(1) - the catalytic core - and CF(0) - the membrane proton channel. CF(1) has five subunits: alpha(3), beta(3), gamma(1), delta(1), epsilon(1). CF(0) has three main subunits: a, b and c.

The protein resides in the cell inner membrane. Functionally, produces ATP from ADP in the presence of a proton gradient across the membrane. The gamma chain is believed to be important in regulating ATPase activity and the flow of protons through the CF(0) complex. This chain is ATP synthase gamma chain, found in Syntrophus aciditrophicus (strain SB).